A 294-amino-acid polypeptide reads, in one-letter code: 33 kDa chaperonin (294 aa).

Intrachain disulfides connect C239–C241 and C272–C275.

It belongs to the HSP33 family. Post-translationally, under oxidizing conditions two disulfide bonds are formed involving the reactive cysteines. Under reducing conditions zinc is bound to the reactive cysteines and the protein is inactive.

The protein resides in the cytoplasm. Its function is as follows. Redox regulated molecular chaperone. Protects both thermally unfolding and oxidatively damaged proteins from irreversible aggregation. Plays an important role in the bacterial defense system toward oxidative stress. In Listeria innocua serovar 6a (strain ATCC BAA-680 / CLIP 11262), this protein is 33 kDa chaperonin.